The chain runs to 368 residues: N-acetylneuraminate epimerase (368 aa).

A signal peptide spans 1 to 19 (MNKTIMALAIMMASFAANA). Kelch repeat units follow at residues 40–84 (TVYI…AFID), 86–137 (NLYV…FVHN), 139–173 (KAYV…KINA), 174–219 (HYFD…VNKG), 222–265 (TWLI…VAGG), 287–336 (ENYQ…PWNN), and 338–367 (LLII…VTVQ). Glu-228 (proton acceptor) is an active-site residue.

It belongs to the NanM family. Homodimer.

It is found in the periplasm. The catalysed reaction is N-acetyl-alpha-neuraminate = N-acetyl-beta-neuraminate. In terms of biological role, converts alpha-N-acetylneuranimic acid (Neu5Ac) to the beta-anomer, accelerating the equilibrium between the alpha- and beta-anomers. Probably facilitates sialidase-negative bacteria to compete successfully for limited amounts of extracellular Neu5Ac, which is likely taken up in the beta-anomer. In addition, the rapid removal of sialic acid from solution might be advantageous to the bacterium to damp down host responses. The polypeptide is N-acetylneuraminate epimerase (Shigella sonnei (strain Ss046)).